The primary structure comprises 452 residues: MEKQYLTVTALTRYIKTKIEYDPHLQSVWLKGEISNFKNHSRGHMYFTLKDENARIAAVMFAGHNRNIKFKPENGMKVLVKGKISVYEASGSYQIYIQDMQPDGVGNLHLAYEQLKVRLEEEGLFSQVYKKAIPPYAKTIGVITSPTGAAIRDIITTIKRRYPIGNVIVFPVLVQGESAAPSIVQAIRTANEMGEIDVLIVGRGGGSIEELWAFNEEMVARAIFKSEIPIISAVGHETDFTIADFVADLRAPTPTAAAELAAPNIIELQEKVLQRTLRLQRAMRELVHKKEEKLQVLQKSYAFRYPRQVYEQKEEQLDRALEQLVLAKERYIDKKVNQLKQLSFYLEKHHPSQKIMQTKVAVETLQKQLQREMQTLLQTKEFAFVRAAQKLEALSPLKVMMRGYGLVYDEEKQVLKSVKDVSLGDAVSVQLQDGILDCSVSGIEERELNDGK.

The protein belongs to the XseA family. In terms of assembly, heterooligomer composed of large and small subunits.

The protein localises to the cytoplasm. The catalysed reaction is Exonucleolytic cleavage in either 5'- to 3'- or 3'- to 5'-direction to yield nucleoside 5'-phosphates.. Functionally, bidirectionally degrades single-stranded DNA into large acid-insoluble oligonucleotides, which are then degraded further into small acid-soluble oligonucleotides. The sequence is that of Exodeoxyribonuclease 7 large subunit from Bacillus cereus (strain B4264).